An 805-amino-acid polypeptide reads, in one-letter code: Na(+)/H(+) antiporter subunit A1 (805 aa).

The next 20 membrane-spanning stretches (helical) occupy residues 1-21 (MSLL…IPFV), 30-50 (LGWF…SYIS), 79-99 (LGLL…LYSI), 117-137 (LFMG…LYLF), 166-186 (MLVT…LSIA), 201-221 (EIQT…GAMT), 226-246 (FPFY…SAYL), 265-285 (IFAV…ITLF), 300-320 (ILAF…GVGA), 337-357 (FTAA…LFMI), 377-397 (LTIM…MAGI), 427-447 (LGIL…VYSI), 480-500 (ILAI…GSII), 531-551 (LGIY…IYLL), 591-611 (LVII…VTPF), 623-643 (PFEL…IFAK), 646-666 (LFSI…FIFF), 671-691 (LALT…LCFY), 707-727 (LVNI…GLIA), and 766-786 (TLFE…MIKL).

The protein belongs to the CPA3 antiporters (TC 2.A.63) subunit A family. As to quaternary structure, may form a heterooligomeric complex that consists of seven subunits: mnhA1, mnhB1, mnhC1, mnhD1, mnhE1, mnhF1 and mnhG1.

The protein resides in the cell membrane. Its function is as follows. Mnh complex is a Na(+)/H(+) antiporter involved in Na(+) excretion. The chain is Na(+)/H(+) antiporter subunit A1 (mnhA1) from Staphylococcus saprophyticus subsp. saprophyticus (strain ATCC 15305 / DSM 20229 / NCIMB 8711 / NCTC 7292 / S-41).